The following is a 123-amino-acid chain: Secreted LysM effector Lys1 (123 aa).

A signal peptide spans 1–20; sequence MMGLAKTLLLASQLTAVVVA. Residues 72–118 enclose the LysM domain; the sequence is KFCWVQAGNKCYQVAMENHISLADFLKWNPGAGSDCRTLWANTYACV.

This sequence belongs to the secreted LysM effector family.

In terms of biological role, might have a role in sequestration of chitin oligosaccharides (breakdown products of fungal cell walls that are released during invasion and act as triggers of host immunity) to dampen host defense. This chain is Secreted LysM effector Lys1, found in Pochonia chlamydosporia (strain 123) (Metacordyceps chlamydosporia).